A 573-amino-acid polypeptide reads, in one-letter code: Probable D-xylulose kinase A (573 aa).

Residues His97, Arg168, Asp284, and Asn285 each contribute to the substrate site. Residues Trp366, 471-472 (GG), and Asn475 each bind ATP.

This sequence belongs to the FGGY kinase family.

The protein localises to the cytoplasm. The catalysed reaction is D-xylulose + ATP = D-xylulose 5-phosphate + ADP + H(+). Its function is as follows. Highly specific D-xylulose kinase which participates in the catabolism of xylose. Xylose is a major component of hemicelluloses such as xylan. Most fungi utilize D-xylose via three enzymatic reactions, xylose reductase (XR), xylitol dehydrogenase (XDH), and xylulokinase, to form xylulose 5-phosphate, which enters pentose phosphate pathway. This Aspergillus fumigatus (strain ATCC MYA-4609 / CBS 101355 / FGSC A1100 / Af293) (Neosartorya fumigata) protein is Probable D-xylulose kinase A (xkiA).